A 686-amino-acid polypeptide reads, in one-letter code: Acyl-CoA synthetase short-chain family member 3, mitochondrial (686 aa).

A mitochondrion-targeting transit peptide spans Met-1 to Gly-29. Glu-227–Arg-230 provides a ligand contact to CoA. Residues Gly-425 to Arg-427 and Asp-446 to Thr-451 each bind ATP. Lys-518 carries the N6-succinyllysine modification. Residue Lys-524 is modified to N6-acetyllysine. Asp-539, Arg-554, and Arg-565 together coordinate ATP. Arg-624 contributes to the CoA binding site.

The protein belongs to the ATP-dependent AMP-binding enzyme family.

It is found in the mitochondrion matrix. The enzyme catalyses acetate + ATP + CoA = acetyl-CoA + AMP + diphosphate. It carries out the reaction propanoate + ATP + CoA = propanoyl-CoA + AMP + diphosphate. The catalysed reaction is butanoate + ATP + CoA = butanoyl-CoA + AMP + diphosphate. Functionally, catalyzes the synthesis of acetyl-CoA from short-chain fatty acids. Propionate is the preferred substrate but can also utilize acetate and butyrate with a much lower affinity. The protein is Acyl-CoA synthetase short-chain family member 3, mitochondrial (ACSS3) of Pongo abelii (Sumatran orangutan).